The chain runs to 337 residues: Serpentine receptor class alpha-17 (337 aa).

The next 6 helical transmembrane spans lie at 28–48 (LNFVFIATVIFLSFYFAGLAI), 110–130 (ELYFYYLTNYFSTYAVFSLTF), 155–175 (IIQLLLSLSTYYVGLYGVPLV), 197–217 (FRTATMVFCIIVTIFIYYLSV), 247–267 (CILIVLQFACIMLSSFGVNYI), and 282–302 (IAPFFPGVTYASLCLPLVIYF).

This sequence belongs to the nematode receptor-like protein sra family.

The protein resides in the membrane. The sequence is that of Serpentine receptor class alpha-17 (sra-17) from Caenorhabditis elegans.